Reading from the N-terminus, the 197-residue chain is Putative manganese efflux pump MntP 1 (197 aa).

6 consecutive transmembrane segments (helical) span residues 8-28 (VILLAIALAMDAFAVSIGLGA), 43-63 (VYAALYFGIAQGVMPLIGYLL), 66-86 (VLLGWLATAAPWLGGGILILL), 123-143 (LAIATSIDAMAAGFTLNLLAL), 146-166 (WLACSIIAIVTAGFGFFGIYL), and 176-196 (DKAEILGGLVLIAIGIKVMFI).

The protein belongs to the MntP (TC 9.B.29) family.

It localises to the cell inner membrane. Probably functions as a manganese efflux pump. The sequence is that of Putative manganese efflux pump MntP 1 from Psychrobacter cryohalolentis (strain ATCC BAA-1226 / DSM 17306 / VKM B-2378 / K5).